A 224-amino-acid polypeptide reads, in one-letter code: Toxin coregulated pilin (224 aa).

The propeptide at M1–G25 is atypical leader sequence. M26 carries the N-methylmethionine modification. The helical transmembrane segment at M26–V46 threads the bilayer. A disulfide bond links C145 and C211.

The protein resides in the fimbrium. Its subcellular location is the membrane. Functionally, major component of the toxin co-regulated pilus (tcp) which is a type IV pilus essential for bacterial aggregation and subsequent colonization in the host small intestine. This Vibrio cholerae serotype O1 (strain ATCC 39315 / El Tor Inaba N16961) protein is Toxin coregulated pilin (tcpA).